The sequence spans 359 residues: Stearoyl-CoA desaturase (359 aa).

Over 1–72 (MPAHLLQDDI…EGPSPKVEYV (72 aa)) the chain is Cytoplasmic. The helical transmembrane segment at 73–93 (WRNIILMSLLHLGALYGITLI) threads the bilayer. Residue N75 coordinates substrate. Residues 94–97 (PTCK) lie on the Lumenal side of the membrane. The chain crosses the membrane as a helical span at residues 98–118 (FYTWLWGVFYYFVSALGITAG). At 119-217 (AHRLWSHRSY…EKLVMFQRRY (99 aa)) the chain is on the cytoplasmic side. Fe cation-binding residues include H120 and H125. The Histidine box-1 motif lies at 120–125 (HRLWSH). N148, R155, and D156 together coordinate substrate. Residues H157, H160, and H161 each contribute to the Fe cation site. Positions 157–161 (HRAHH) match the Histidine box-2 motif. The substrate site is built by R188 and K189. Residues S198 and S203 each carry the phosphoserine modification. A helical transmembrane segment spans residues 218–237 (YKPGLLMMCFILPTLVPWYF). Over 238–241 (WGET) the chain is Lumenal. The helical transmembrane segment at 242 to 263 (FQNSVFVATFLRYAVVLNATWL) threads the bilayer. W262 lines the substrate pocket. At 264–359 (VNSAAHLFGY…RTGDGNYKSG (96 aa)) the chain is on the cytoplasmic side. Residues H269, H298, H301, and H302 each coordinate Fe cation. The short motif at 298–302 (HNYHH) is the Histidine box-3 element.

Belongs to the fatty acid desaturase type 1 family. As to quaternary structure, may self-associate and form homodimers. Requires Fe(2+) as cofactor. As to expression, detected in fetal liver, lung and brain. Highly expressed in adult adipose tissue, and at lower levels in adult brain and lung.

Its subcellular location is the endoplasmic reticulum membrane. The enzyme catalyses octadecanoyl-CoA + 2 Fe(II)-[cytochrome b5] + O2 + 2 H(+) = (9Z)-octadecenoyl-CoA + 2 Fe(III)-[cytochrome b5] + 2 H2O. The catalysed reaction is hexadecanoyl-CoA + 2 Fe(II)-[cytochrome b5] + O2 + 2 H(+) = (9Z)-hexadecenoyl-CoA + 2 Fe(III)-[cytochrome b5] + 2 H2O. Stearoyl-CoA desaturase that utilizes O(2) and electrons from reduced cytochrome b5 to introduce the first double bond into saturated fatty acyl-CoA substrates. Catalyzes the insertion of a cis double bond at the delta-9 position into fatty acyl-CoA substrates including palmitoyl-CoA and stearoyl-CoA. Gives rise to a mixture of 16:1 and 18:1 unsaturated fatty acids. Plays an important role in lipid biosynthesis. Plays an important role in regulating the expression of genes that are involved in lipogenesis and in regulating mitochondrial fatty acid oxidation. Plays an important role in body energy homeostasis. Contributes to the biosynthesis of membrane phospholipids, cholesterol esters and triglycerides. This is Stearoyl-CoA desaturase (SCD) from Homo sapiens (Human).